The sequence spans 339 residues: Dihydroorotase (339 aa).

The Zn(2+) site is built by His-12 and His-14. Substrate contacts are provided by residues 14–16 and Asn-40; that span reads HVR. Zn(2+) contacts are provided by Lys-94, His-133, His-167, and Asp-239. Lys-94 is modified (N6-carboxylysine). His-133 is a substrate binding site. Residue Asp-239 is part of the active site. Substrate-binding residues include His-243 and Ala-255.

Belongs to the metallo-dependent hydrolases superfamily. DHOase family. Class II DHOase subfamily. Homodimer. The cofactor is Zn(2+).

The catalysed reaction is (S)-dihydroorotate + H2O = N-carbamoyl-L-aspartate + H(+). It functions in the pathway pyrimidine metabolism; UMP biosynthesis via de novo pathway; (S)-dihydroorotate from bicarbonate: step 3/3. Catalyzes the reversible cyclization of carbamoyl aspartate to dihydroorotate. In Helicobacter pylori (strain P12), this protein is Dihydroorotase.